A 665-amino-acid polypeptide reads, in one-letter code: tRNA 5-methylaminomethyl-2-thiouridine biosynthesis bifunctional protein MnmC (665 aa).

Positions 1 to 235 are tRNA (mnm(5)s(2)U34)-methyltransferase; sequence MTITRHAQID…KWEVLRGTFI (235 aa). Positions 266-665 are FAD-dependent cmnm(5)s(2)U34 oxidoreductase; the sequence is IGAGLAGCAT…RGKGKQTVGH (400 aa).

The protein in the N-terminal section; belongs to the methyltransferase superfamily. tRNA (mnm(5)s(2)U34)-methyltransferase family. It in the C-terminal section; belongs to the DAO family. FAD serves as cofactor.

It localises to the cytoplasm. It carries out the reaction 5-aminomethyl-2-thiouridine(34) in tRNA + S-adenosyl-L-methionine = 5-methylaminomethyl-2-thiouridine(34) in tRNA + S-adenosyl-L-homocysteine + H(+). Functionally, catalyzes the last two steps in the biosynthesis of 5-methylaminomethyl-2-thiouridine (mnm(5)s(2)U) at the wobble position (U34) in tRNA. Catalyzes the FAD-dependent demodification of cmnm(5)s(2)U34 to nm(5)s(2)U34, followed by the transfer of a methyl group from S-adenosyl-L-methionine to nm(5)s(2)U34, to form mnm(5)s(2)U34. This is tRNA 5-methylaminomethyl-2-thiouridine biosynthesis bifunctional protein MnmC from Pseudomonas syringae pv. syringae (strain B728a).